The chain runs to 526 residues: Peptide chain release factor 3 (526 aa).

The 269-residue stretch at 9–277 (DKRRTFAIIS…GIVEWAPKPL (269 aa)) folds into the tr-type G domain. Residues 18 to 25 (SHPDAGKT), 86 to 90 (DTPGH), and 140 to 143 (NKLD) each bind GTP.

It belongs to the TRAFAC class translation factor GTPase superfamily. Classic translation factor GTPase family. PrfC subfamily.

The protein resides in the cytoplasm. Its function is as follows. Increases the formation of ribosomal termination complexes and stimulates activities of RF-1 and RF-2. It binds guanine nucleotides and has strong preference for UGA stop codons. It may interact directly with the ribosome. The stimulation of RF-1 and RF-2 is significantly reduced by GTP and GDP, but not by GMP. The polypeptide is Peptide chain release factor 3 (Shewanella baltica (strain OS223)).